Consider the following 1008-residue polypeptide: Kinesin-like protein KIN-5C (1008 aa).

A Kinesin motor domain is found at 12-359 (NVQVLLRCRP…LDYAHRAKSI (348 aa)). 98 to 105 (GQTGTGKT) contributes to the ATP binding site. Positions 402 to 459 (KDRYQQEENERKAMADQIEQMTTSLEANQKQINDLQEKYDSELQHSADLSKKLEATEK) form a coiled coil. Disordered stretches follow at residues 910 to 931 (VEAH…TAGI), 943 to 962 (YKDY…EVPS), and 975 to 1008 (ESLM…TINN). Residues 913 to 925 (HLGESQHLQESHS) are compositionally biased toward basic and acidic residues. Basic and acidic residues predominate over residues 979 to 995 (DEFRENHPYEPSKDRRP).

The protein belongs to the TRAFAC class myosin-kinesin ATPase superfamily. Kinesin family. KIN-5/BimC subfamily.

The protein localises to the cytoplasm. The protein resides in the cytoskeleton. Its subcellular location is the spindle. In terms of biological role, responsible for microtubule translocation. May be important for the organization of phragmoplast-specific arrays of microtubules. Plays an essential role in stabilizing the mitotic spindle. Required during mitotic cytokinesis. The chain is Kinesin-like protein KIN-5C from Oryza sativa subsp. japonica (Rice).